The following is a 378-amino-acid chain: Merozoite surface protein P41 (378 aa).

An N-terminal signal peptide occupies residues 1 to 20 (MKGVIFCLVVLLWRQAWVSS). Residues 21–133 (KSHKCDFTKE…LKINRFLKDD (113 aa)) enclose the 6-Cys 1 domain. 3 cysteine pairs are disulfide-bonded: Cys25-Cys42, Cys56-Cys113, and Cys64-Cys111. 4 N-linked (GlcNAc...) asparagine glycosylation sites follow: Asn77, Asn149, Asn182, and Asn205. A 6-Cys 2 domain is found at 241–375 (VIKGCDFGNN…GESEVVLNSF (135 aa)). Disulfide bonds link Cys245–Cys270, Cys284–Cys348, and Cys297–Cys346. Residue Asn351 is glycosylated (N-linked (GlcNAc...) asparagine).

In terms of assembly, heterodimer; heterodimerizes with PF12. May form an antiparallel heterodimer with PF12. Post-translationally, processed into a soluble form.

It is found in the cell surface. Its subcellular location is the cell membrane. The chain is Merozoite surface protein P41 (PF41) from Plasmodium falciparum (isolate 3D7).